A 314-amino-acid polypeptide reads, in one-letter code: Melanoma-associated antigen 3 (314 aa).

Basic and acidic residues predominate over residues 1-20 (MPLEQRSQHCKPEEGLEARG). The tract at residues 1-99 (MPLEQRSQHC…QEEEGPSTFP (99 aa)) is disordered. The span at 21–44 (EALGLVGAQAPATEEQEAASSSST) shows a compositional bias: low complexity. Over residues 65–87 (PQGASSLPTTMNYPLWSQSYEDS) the composition is skewed to polar residues. In terms of domain architecture, MAGE spans 109-308 (LSRKVAELVH…ISYPPLHEWV (200 aa)).

As to quaternary structure, interacts with TRIM28. Ubiquitinated by the DCX(DCAF12) complex specifically recognizes the diglutamate (Glu-Glu) at the C-terminus, leading to its degradation. Expressed in many tumors of several types, such as melanoma, head and neck squamous cell carcinoma, lung carcinoma and breast carcinoma, but not in normal tissues except for testes and placenta. Never expressed in kidney tumors, Leukemias and lymphomas.

Functionally, activator of ubiquitin ligase activity of RING-type zinc finger-containing E3 ubiquitin-protein ligases that acts as a repressor of autophagy. May enhance ubiquitin ligase activity of TRIM28 and stimulate p53/TP53 ubiquitination by TRIM28. Proposed to act through recruitment and/or stabilization of the Ubl-conjugating enzyme (E2) at the E3:substrate complex. May play a role in embryonal development and tumor transformation or aspects of tumor progression. In vitro promotes cell viability in melanoma cell lines. Antigen recognized on a melanoma by autologous cytolytic T-lymphocytes. The protein is Melanoma-associated antigen 3 of Homo sapiens (Human).